A 705-amino-acid chain; its full sequence is Complement C1r subcomponent (705 aa).

An N-terminal signal peptide occupies residues 1–17 (MWLLYLLVPALFCRAGG). The CUB 1 domain maps to 18–141 (SIPIPQKLFG…KGFLAYYQAV (124 aa)). Residues E66, D74, and D119 each coordinate Ca(2+). Cysteines 71 and 89 form a disulfide. N125 carries N-linked (GlcNAc...) asparagine glycosylation. Ca(2+) is bound by residues D142, L143, and E145. An EGF-like; calcium-binding domain is found at 142–190 (DLDECASRSKSGEEDPQPQCQHLCHNYVGGYFCSCRPGYELQEDTHSCQ). Cystine bridges form between C146-C165, C161-C174, C176-C189, and C193-C220. Residues N167, Y168, and G171 each coordinate Ca(2+). The residue at position 167 (N167) is a (3R)-3-hydroxyasparagine. The region spanning 193–305 (CSSELYTEAS…RGWKLRYTTE (113 aa)) is the CUB 2 domain. The residue at position 206 (S206) is a Phosphoserine; by CK2. Residue N221 is glycosylated (N-linked (GlcNAc...) asparagine). 4 residues coordinate Ca(2+): D243, D253, D290, and D294. An intrachain disulfide couples C250 to C268. 2 Sushi domains span residues 307–373 (IKCP…RCKI) and 374–449 (KDCG…RCLP). 5 cysteine pairs are disulfide-bonded: C309–C358, C338–C371, C376–C429, C406–C447, and C451–C577. The Peptidase S1 domain maps to 464-702 (IIGGQKAKMG…YVDWIKKEME (239 aa)). H502 (charge relay system) is an active-site residue. The N-linked (GlcNAc...) asparagine glycan is linked to N514. Residue D557 is the Charge relay system of the active site. Residue N581 is glycosylated (N-linked (GlcNAc...) asparagine). 2 disulfide bridges follow: C620–C639 and C650–C680. The Charge relay system role is filled by S654.

This sequence belongs to the peptidase S1 family. As to quaternary structure, core component of the complement C1 complex, a calcium-dependent complex composed of 1 molecule of the C1Q subcomplex, 2 molecules of C1R and 2 molecules of C1S. The C1Q subcomplex is composed 18 subunits: 3 chains of C1QA, C1QB, and C1QC trimerize to form 6 collagen-like triple helices connected to six globular ligand-recognition modules. Within the C1 complex, C1R is a dimer of identical chains, each of which is activated by cleavage into two chains, heavy and light, connected by disulfide bonds. Post-translationally, cleaved and activated by autocatalytic processing to generate Complement C1r subcomponent heavy and light chains that are connected by disulfide bonds. The iron and 2-oxoglutarate dependent 3-hydroxylation of aspartate and asparagine is (R) stereospecific within EGF domains.

The protein resides in the secreted. Its subcellular location is the cell surface. It carries out the reaction Selective cleavage of Lys(or Arg)-|-Ile bond in complement subcomponent C1s to form the active form of C1s (EC 3.4.21.42).. Its activity is regulated as follows. Activated by the C1Q subcomplex of the C1 complex following C1Q binding to immunoglobulins (IgG or IgM) complexed with antigens to form antigen-antibody complexes on the surface of pathogens. Immunoglobulin-binding promotes autoactivation of C1R, which results in the cleavage of the Arg-Ile bond in the catalytic domain. Serine protease component of the complement C1 complex, a multiprotein complex that initiates the classical pathway of the complement system, a cascade of proteins that leads to phagocytosis and breakdown of pathogens and signaling that strengthens the adaptive immune system. C1R catalyzes the first enzymatic step in the classical complement pathway: it is activated by the C1Q subcomplex of the C1 complex, which associates with IgG or IgM immunoglobulins complexed with antigens to form antigen-antibody complexes on the surface of pathogens. Immunoglobulin-binding promotes the autocatalytic cleavage and activation of C1R. Activated C1R then cleaves and activates C1S, the second protease of the classical complement pathway. It is unclear if C1R activates C1S within single, strained C1 complexes or between neighboring C1 complexes on surfaces. This is Complement C1r subcomponent from Homo sapiens (Human).